The sequence spans 103 residues: Enhancer of rudimentary homolog (103 aa).

It belongs to the E(R) family. In terms of assembly, homodimer.

Functionally, may have a role in the cell cycle. The protein is Enhancer of rudimentary homolog of Aedes aegypti (Yellowfever mosquito).